Here is a 158-residue protein sequence, read N- to C-terminus: Transcription elongation factor GreA (158 aa).

A disordered region spans residues 41-61; sequence GDLSENAEYHAAKEDQSHNEG. Residues 51-74 are a coiled coil; sequence AAKEDQSHNEGRIAELEDKLARAE.

The protein belongs to the GreA/GreB family.

Necessary for efficient RNA polymerase transcription elongation past template-encoded arresting sites. The arresting sites in DNA have the property of trapping a certain fraction of elongating RNA polymerases that pass through, resulting in locked ternary complexes. Cleavage of the nascent transcript by cleavage factors such as GreA or GreB allows the resumption of elongation from the new 3'terminus. GreA releases sequences of 2 to 3 nucleotides. The chain is Transcription elongation factor GreA from Nitrobacter hamburgensis (strain DSM 10229 / NCIMB 13809 / X14).